We begin with the raw amino-acid sequence, 446 residues long: Ribulose bisphosphate carboxylase large chain (446 aa).

Substrate is bound by residues asparagine 89 and threonine 139. Lysine 141 serves as the catalytic Proton acceptor. Residue lysine 143 participates in substrate binding. Lysine 167, aspartate 169, and glutamate 170 together coordinate Mg(2+). At lysine 167 the chain carries N6-carboxylysine. Catalysis depends on histidine 260, which acts as the Proton acceptor. 3 residues coordinate substrate: arginine 261, histidine 293, and serine 345.

This sequence belongs to the RuBisCO large chain family. Type I subfamily. In terms of assembly, heterohexadecamer of 8 large chains and 8 small chains; disulfide-linked. The disulfide link is formed within the large subunit homodimers. Requires Mg(2+) as cofactor. The disulfide bond which can form in the large chain dimeric partners within the hexadecamer appears to be associated with oxidative stress and protein turnover.

It localises to the plastid. The protein resides in the chloroplast. It catalyses the reaction 2 (2R)-3-phosphoglycerate + 2 H(+) = D-ribulose 1,5-bisphosphate + CO2 + H2O. It carries out the reaction D-ribulose 1,5-bisphosphate + O2 = 2-phosphoglycolate + (2R)-3-phosphoglycerate + 2 H(+). Functionally, ruBisCO catalyzes two reactions: the carboxylation of D-ribulose 1,5-bisphosphate, the primary event in carbon dioxide fixation, as well as the oxidative fragmentation of the pentose substrate in the photorespiration process. Both reactions occur simultaneously and in competition at the same active site. The sequence is that of Ribulose bisphosphate carboxylase large chain from Exacum affine (Persian violet).